The chain runs to 317 residues: Protease HtpX homolog (317 aa).

Helical transmembrane passes span 6–26 (TAILLAGLTALFMAVGFAIGG) and 28–48 (GGMMIAFVVASATNLFSYWNS). Position 130 (His-130) interacts with Zn(2+). Residue Glu-131 is part of the active site. Zn(2+) is bound at residue His-134. 2 helical membrane passes run 145 to 165 (MTATIAGAISMLANFGLLFGG) and 173 to 193 (PFGAIGTILMVILAPLAAMLV). Glu-202 is a binding site for Zn(2+). The segment at 283-317 (GGGGFAPGPAPAVRPPGGNPWGVDPGGGQRRGPWG) is disordered. Residues 290–300 (GPAPAVRPPGG) show a composition bias toward pro residues. Residues 306–317 (DPGGGQRRGPWG) show a composition bias toward gly residues.

The protein belongs to the peptidase M48B family. Zn(2+) serves as cofactor.

It localises to the cell inner membrane. This is Protease HtpX homolog from Xanthobacter autotrophicus (strain ATCC BAA-1158 / Py2).